The sequence spans 730 residues: MLKTVLMPSPSKCSLMAKRDQDWSPNQLRLDILDQNARDADPRGTGFDYAEEFQELDLDAVKADLEELMTSSQDWWPADYGHYGPLFIRMAWHSAGTYRTTDGRGGASGGRQRFAPLNSWPDNANLDKARRLLWPIKKKYGRKLSWADLIVLAGNHAIESMGLKTFGWAGGREDAFEPDEAVDWGPEDEMEAHQSERRTDDGELKEPLGAAVMGLIYVDPEGPNGNPDPLASAENIRESFGRMAMNDEETAALIAGGHTFGKVHGADDPEENLGDVPEDAPIEQMGLGWENDYGSGKAGDTITSGIEGPWTQAPIEWDNGYIDNLLDYEWEPEKGPGGAWQWTPTDEALANTVPDAHDPSEKQTPMMLTTDIALKRDPDYREVMERFQENPMEFGINFARAWYKLIHRDMGPPERFLGPDAPDEEMIWQDPVPDVDHDLIGDEEVAELKTDILETDLTVSQLVKTAWASASTYRDSDKRGGANGARIRLEPQKNWEVNEPAQLETVLATLEEIQAEFNSARTDDTRVSLADLIVLGGNAAVEQAAADAGYDVTVPFEPGRTDATPEQTDVDSFEALKPRADGFRNYARDDVDVPAEELLVDRADLLDLTPEEMTVLVGGLRSLGATYQDSDLGVFTDEPGTLTNDFFEVVLGMDTEWEPVSESKDVFEGYDRETGEQTWAASRVDLIFGSHSRLRAIAEVYGADGAEAELVDDFVDAWHKVMRLDRFDLE.

The segment at residues 92-217 (WHSAGTYRTT…LGAAVMGLIY (126 aa)) is a cross-link (tryptophyl-tyrosyl-methioninium (Trp-Tyr) (with M-243)). H93 (proton acceptor) is an active-site residue. Positions 217–243 (YVDPEGPNGNPDPLASAENIRESFGRM) form a cross-link, tryptophyl-tyrosyl-methioninium (Tyr-Met) (with W-92). A heme b-binding site is contributed by H258.

Belongs to the peroxidase family. Peroxidase/catalase subfamily. In terms of assembly, homodimer or homotetramer. Heme b is required as a cofactor. Post-translationally, formation of the three residue Trp-Tyr-Met cross-link is important for the catalase, but not the peroxidase activity of the enzyme.

It carries out the reaction H2O2 + AH2 = A + 2 H2O. The catalysed reaction is 2 H2O2 = O2 + 2 H2O. Its function is as follows. Bifunctional enzyme with both catalase and broad-spectrum peroxidase activity. The sequence is that of Catalase-peroxidase 1 from Haloarcula marismortui (strain ATCC 43049 / DSM 3752 / JCM 8966 / VKM B-1809) (Halobacterium marismortui).